The primary structure comprises 39 residues: U-limacoditoxin(13)-As54 (39 aa).

An N-terminal signal peptide occupies residues 1–23; sequence MSKYIVLLVVSAIALLQFSMIEC. Phenylalanine amide is present on phenylalanine 37.

Belongs to the FARP (FMRFamide related peptide) family. As to expression, expressed by the venom secretory cell of the spine. The spine is a cuticular structure containing a single large nucleated venom-secreting cell at its base. It is an independent unit capable of producing, storing and injecting venom. On the back of A.stimulea caterpillars, spines are grouped together by 50 to 100 to form scoli, of which there are eight.

The protein resides in the secreted. Functionally, strongly activates (at 30 uM) the human neuropeptide FF receptor 1 (NPFF1R), a G-protein coupled receptor, with an effect that is equipotent to the endogenous RFRP-1 ligand in activating NPFFR1. Is toxic when injected into Drosophila melanogaster. Also shows a moderate anthelmintic activity against the parasitic nematode H.contortus (drug susceptible Kirby isolate) (IC(50)=20.1 uM). The chain is U-limacoditoxin(13)-As54 from Acharia stimulea (Saddleback caterpillar moth).